The sequence spans 506 residues: (+)-vincadifformine 19-hydroxylase (506 aa).

Over 1 to 4 (MELD) the chain is Lumenal. A helical transmembrane segment spans residues 5 to 25 (ECSPSIFIISFIFIAISIAIL). At 26–506 (RRIRPKKTKA…DLHLIPTSYM (481 aa)) the chain is on the cytoplasmic side. Cys-450 is a binding site for heme.

This sequence belongs to the cytochrome P450 family. Heme is required as a cofactor. In terms of tissue distribution, accumulates progressively in roots.

Its subcellular location is the endoplasmic reticulum membrane. It carries out the reaction (+)-vincadifformine + reduced [NADPH--hemoprotein reductase] + O2 = (+)-minovincinine + oxidized [NADPH--hemoprotein reductase] + H2O + H(+). The protein operates within alkaloid biosynthesis. The enantiomer (-)-vincadifformine acts as a competitive inhibitor. Component of the monoterpenoid indole alkaloids (MIAs, e.g. echitovenine, tabersonine, lochnericine, 19-hydroxytabersonine and horhammericine) biosynthetic pathway; MIAs are used in cancer treatment and other medical applications. Cytochrome P450 catalyzing the hydroxylation of (+)-vincadifformine to (+)-minovincinine. The protein is (+)-vincadifformine 19-hydroxylase of Catharanthus roseus (Madagascar periwinkle).